The chain runs to 474 residues: 3-isopropylmalate dehydratase large subunit (474 aa).

Cys-353, Cys-414, and Cys-417 together coordinate [4Fe-4S] cluster.

The protein belongs to the aconitase/IPM isomerase family. LeuC type 1 subfamily. As to quaternary structure, heterodimer of LeuC and LeuD. [4Fe-4S] cluster is required as a cofactor.

It catalyses the reaction (2R,3S)-3-isopropylmalate = (2S)-2-isopropylmalate. It functions in the pathway amino-acid biosynthesis; L-leucine biosynthesis; L-leucine from 3-methyl-2-oxobutanoate: step 2/4. Functionally, catalyzes the isomerization between 2-isopropylmalate and 3-isopropylmalate, via the formation of 2-isopropylmaleate. The polypeptide is 3-isopropylmalate dehydratase large subunit (Xylella fastidiosa (strain 9a5c)).